We begin with the raw amino-acid sequence, 276 residues long: Acyl-[acyl-carrier-protein]--UDP-N-acetylglucosamine O-acyltransferase (276 aa).

This sequence belongs to the transferase hexapeptide repeat family. LpxA subfamily. Homotrimer.

It is found in the cytoplasm. It catalyses the reaction a (3R)-hydroxyacyl-[ACP] + UDP-N-acetyl-alpha-D-glucosamine = a UDP-3-O-[(3R)-3-hydroxyacyl]-N-acetyl-alpha-D-glucosamine + holo-[ACP]. It functions in the pathway glycolipid biosynthesis; lipid IV(A) biosynthesis; lipid IV(A) from (3R)-3-hydroxytetradecanoyl-[acyl-carrier-protein] and UDP-N-acetyl-alpha-D-glucosamine: step 1/6. In terms of biological role, involved in the biosynthesis of lipid A, a phosphorylated glycolipid that anchors the lipopolysaccharide to the outer membrane of the cell. The chain is Acyl-[acyl-carrier-protein]--UDP-N-acetylglucosamine O-acyltransferase from Synechocystis sp. (strain ATCC 27184 / PCC 6803 / Kazusa).